The primary structure comprises 186 residues: ATP-dependent protease subunit HslV (186 aa).

Residue Thr-14 is part of the active site. Residues Ala-168, Cys-171, and Thr-174 each coordinate Na(+).

Belongs to the peptidase T1B family. HslV subfamily. In terms of assembly, a double ring-shaped homohexamer of HslV is capped on each side by a ring-shaped HslU homohexamer. The assembly of the HslU/HslV complex is dependent on binding of ATP.

The protein localises to the cytoplasm. It carries out the reaction ATP-dependent cleavage of peptide bonds with broad specificity.. With respect to regulation, allosterically activated by HslU binding. In terms of biological role, protease subunit of a proteasome-like degradation complex believed to be a general protein degrading machinery. The protein is ATP-dependent protease subunit HslV of Bradyrhizobium sp. (strain BTAi1 / ATCC BAA-1182).